Reading from the N-terminus, the 486-residue chain is Cardiolipin synthase A (486 aa).

Transmembrane regions (helical) follow at residues 3–23 (TFYT…IAGV) and 38–58 (MAWL…YLSV). 2 consecutive PLD phosphodiesterase domains span residues 219-246 (MDLR…VDPR) and 399-426 (EGGL…DMRS). Active-site residues include His-224, Lys-226, Asp-231, His-404, Lys-406, and Asp-411.

Belongs to the phospholipase D family. Cardiolipin synthase subfamily. ClsA sub-subfamily.

It is found in the cell inner membrane. The catalysed reaction is 2 a 1,2-diacyl-sn-glycero-3-phospho-(1'-sn-glycerol) = a cardiolipin + glycerol. Its function is as follows. Catalyzes the reversible phosphatidyl group transfer from one phosphatidylglycerol molecule to another to form cardiolipin (CL) (diphosphatidylglycerol) and glycerol. In Salmonella gallinarum (strain 287/91 / NCTC 13346), this protein is Cardiolipin synthase A.